We begin with the raw amino-acid sequence, 156 residues long: Arginine repressor (156 aa).

The protein belongs to the ArgR family.

Its subcellular location is the cytoplasm. Its pathway is amino-acid biosynthesis; L-arginine biosynthesis [regulation]. Functionally, regulates arginine biosynthesis genes. This Shewanella loihica (strain ATCC BAA-1088 / PV-4) protein is Arginine repressor.